The sequence spans 386 residues: Zinc finger CCCH domain-containing protein 2 (386 aa).

2 consecutive C3H1-type zinc fingers follow at residues 116-143 and 151-175; these read HYSGTACPDFRKGGCKRGDACEYAHGVF and RYRTQPCKDGTACRRRVCFFAHTPD. Disordered regions lie at residues 180-200 and 220-252; these read LPAQQSSPRSVASSPLAESYD and SSPTSTLMSPPKSPPSESPPLSPDGAAAIRRGS. A compositionally biased stretch (polar residues) spans 182 to 192; the sequence is AQQSSPRSVAS. The segment covering 220–229 has biased composition (low complexity); sequence SSPTSTLMSP. A compositionally biased stretch (pro residues) spans 230 to 241; sequence PKSPPSESPPLS.

Its subcellular location is the nucleus. In terms of biological role, involved in leaf senescence delay. May repress jasmonic acid (JA) signaling role in promoting leaf senescence. May regulate panicle development and pollination/fertilization process. The chain is Zinc finger CCCH domain-containing protein 2 from Oryza sativa subsp. japonica (Rice).